Reading from the N-terminus, the 118-residue chain is Large ribosomal subunit protein uL22 (118 aa).

This sequence belongs to the universal ribosomal protein uL22 family. In terms of assembly, part of the 50S ribosomal subunit.

Its function is as follows. This protein binds specifically to 23S rRNA; its binding is stimulated by other ribosomal proteins, e.g. L4, L17, and L20. It is important during the early stages of 50S assembly. It makes multiple contacts with different domains of the 23S rRNA in the assembled 50S subunit and ribosome. The globular domain of the protein is located near the polypeptide exit tunnel on the outside of the subunit, while an extended beta-hairpin is found that lines the wall of the exit tunnel in the center of the 70S ribosome. This Thermomicrobium roseum (strain ATCC 27502 / DSM 5159 / P-2) protein is Large ribosomal subunit protein uL22.